A 522-amino-acid polypeptide reads, in one-letter code: Amphoterin-induced protein 2 (522 aa).

Residues 1-39 (MSLRVHTLPTLLGAVVRPGCRELLCLLMITVAVGPGASG) form the signal peptide. Residues 40–68 (VCPTACICATDIVSCTNKHLSKVPGNLFR) enclose the LRRNT domain. At 40–398 (VCPTACICAT…RSHAHEAFNT (359 aa)) the chain is on the extracellular side. Intrachain disulfides connect C41–C47 and C45–C54. LRR repeat units lie at residues 69–90 (LMKR…WIPV), 94–115 (KLNT…SFST), 118–139 (NLKC…VFQE), 142–163 (VLEV…AFGG), 166–187 (QLQK…LYVG), and 193–214 (ELMF…HINL). N104 is a glycosylation site (N-linked (GlcNAc...) asparagine). Residues 228-284 (NPFVCDCSLYSLLVFWYRRHFSSVMDFKNDYTCRLWSDSRHSRQVLLLQDSFMNCSD) enclose the LRRCT domain. Intrachain disulfides connect C232–C260 and C234–C282. 6 N-linked (GlcNAc...) asparagine glycosylation sites follow: N281, N288, N345, N373, N381, and N384. The region spanning 289-379 (GSFRALGFIH…RLLNETVDVT (91 aa)) is the Ig-like C2-type domain. Residues C310 and C363 are joined by a disulfide bond. The helical transmembrane segment at 399–419 (AFTTLAACVASIVLVLLYLYL) threads the bilayer. Over 420–522 (TPCPCKCKTK…FSDTPFVAST (103 aa)) the chain is Cytoplasmic. The tract at residues 501 to 522 (RGKSDSDSVNSVFSDTPFVAST) is disordered.

This sequence belongs to the immunoglobulin superfamily. AMIGO family. As to quaternary structure, binds itself as well as AMIGO1 and AMIGO3.

The protein localises to the cell membrane. Its subcellular location is the nucleus. Its function is as follows. Required for depolarization-dependent survival of cultured cerebellar granule neurons. May mediate homophilic as well as heterophilic cell-cell interaction with AMIGO1 or AMIGO3. May contribute to signal transduction through its intracellular domain. This Pongo abelii (Sumatran orangutan) protein is Amphoterin-induced protein 2.